The sequence spans 244 residues: Chaperone protein FimB/FhaD (244 aa).

Positions 1–24 are cleaved as a signal peptide; it reads MARWRRRLGVAALGAAMLASLAPA.

It belongs to the periplasmic pilus chaperone family.

Its subcellular location is the periplasm. Required for the biogenesis of the filamentous hemagglutinin and the fimbria. The polypeptide is Chaperone protein FimB/FhaD (fimB) (Bordetella pertussis (strain Tohama I / ATCC BAA-589 / NCTC 13251)).